The primary structure comprises 360 residues: mRNA cap guanine-N(7) methyltransferase (360 aa).

A disordered region spans residues 1 to 62 (MSSSNSRVHE…NRHENNGNAQ (62 aa)). Residues 7–19 (RVHEEQPPTENRR) are compositionally biased toward basic and acidic residues. Positions 83-358 (SPIIQLKRFN…FYLAFAFEKR (276 aa)) constitute an mRNA cap 0 methyltransferase domain. MRNA is bound at residue 92-93 (NN). The S-adenosyl-L-methionine site is built by K96, G118, D140, D168, Q191, and Y196.

It belongs to the class I-like SAM-binding methyltransferase superfamily. mRNA cap 0 methyltransferase family. Interacts with cdk9.

It localises to the nucleus. The enzyme catalyses a 5'-end (5'-triphosphoguanosine)-ribonucleoside in mRNA + S-adenosyl-L-methionine = a 5'-end (N(7)-methyl 5'-triphosphoguanosine)-ribonucleoside in mRNA + S-adenosyl-L-homocysteine. In terms of biological role, responsible for methylating the 5'-cap structure of mRNAs. This chain is mRNA cap guanine-N(7) methyltransferase (pcm1), found in Schizosaccharomyces pombe (strain 972 / ATCC 24843) (Fission yeast).